Here is a 367-residue protein sequence, read N- to C-terminus: DNA replication and repair protein RecF (367 aa).

30–37 lines the ATP pocket; that stretch reads GENAQGKT.

The protein belongs to the RecF family.

It localises to the cytoplasm. Its function is as follows. The RecF protein is involved in DNA metabolism; it is required for DNA replication and normal SOS inducibility. RecF binds preferentially to single-stranded, linear DNA. It also seems to bind ATP. In Chlamydia caviae (strain ATCC VR-813 / DSM 19441 / 03DC25 / GPIC) (Chlamydophila caviae), this protein is DNA replication and repair protein RecF.